The following is a 140-amino-acid chain: UPF0134 protein MPN_130 (140 aa).

The protein belongs to the UPF0134 family.

The chain is UPF0134 protein MPN_130 from Mycoplasma pneumoniae (strain ATCC 29342 / M129 / Subtype 1) (Mycoplasmoides pneumoniae).